The following is a 385-amino-acid chain: MKNITILGATGSIGTQTLDVIRREKEELKLVAISANKSDKKVIEIIKEFKPKYAVLMEENAFKIVEDFCIDNKIDTKVLKGMEGMIYISTLEEVNTVVTSVVGMIGLVPTIKAIESGKDIALANKETLVVAGELVISKAKEHNVNILPVDSEHGAIFQCLRGNKKEEVKNIIVTASGGPFRGKKKEELIDVKPEHALKHPKWNMGRKISIDSATLMNKGLEVIEAHFLFGVDYENIKVVVHPQSIVHSMVEYKDGSVIAQMATPDMKLPIQYALNYPNRKESQIEPLDFYKISNLTFEKPDMDTFLPLKLAYEAGKKGGVMPAILNGANEVAVDLFLKGKIEFLQIGDLLQECMNKFYKSMEATLENVISVDKEVREYLGKKYDI.

The NADPH site is built by threonine 10, glycine 11, serine 12, isoleucine 13, lysine 37, and asparagine 124. Residue lysine 125 coordinates 1-deoxy-D-xylulose 5-phosphate. Residue glutamate 126 participates in NADPH binding. A Mn(2+)-binding site is contributed by aspartate 150. 1-deoxy-D-xylulose 5-phosphate is bound by residues serine 151, glutamate 152, serine 176, and histidine 199. Glutamate 152 is a Mn(2+) binding site. Position 205 (glycine 205) interacts with NADPH. Serine 212, asparagine 217, lysine 218, and glutamate 221 together coordinate 1-deoxy-D-xylulose 5-phosphate. Residue glutamate 221 coordinates Mn(2+).

This sequence belongs to the DXR family. Mg(2+) serves as cofactor. Requires Mn(2+) as cofactor.

It carries out the reaction 2-C-methyl-D-erythritol 4-phosphate + NADP(+) = 1-deoxy-D-xylulose 5-phosphate + NADPH + H(+). It functions in the pathway isoprenoid biosynthesis; isopentenyl diphosphate biosynthesis via DXP pathway; isopentenyl diphosphate from 1-deoxy-D-xylulose 5-phosphate: step 1/6. Its function is as follows. Catalyzes the NADPH-dependent rearrangement and reduction of 1-deoxy-D-xylulose-5-phosphate (DXP) to 2-C-methyl-D-erythritol 4-phosphate (MEP). In Clostridium botulinum (strain ATCC 19397 / Type A), this protein is 1-deoxy-D-xylulose 5-phosphate reductoisomerase.